The chain runs to 529 residues: Peptide chain release factor 3 (529 aa).

A tr-type G domain is found at 11-280 (SKRRTFAIIS…GLTDWAPAPL (270 aa)). GTP contacts are provided by residues 20–27 (SHPDAGKT), 88–92 (DTPGH), and 142–145 (NKLD).

This sequence belongs to the TRAFAC class translation factor GTPase superfamily. Classic translation factor GTPase family. PrfC subfamily.

It localises to the cytoplasm. Its function is as follows. Increases the formation of ribosomal termination complexes and stimulates activities of RF-1 and RF-2. It binds guanine nucleotides and has strong preference for UGA stop codons. It may interact directly with the ribosome. The stimulation of RF-1 and RF-2 is significantly reduced by GTP and GDP, but not by GMP. This chain is Peptide chain release factor 3, found in Vibrio vulnificus (strain YJ016).